The following is a 785-amino-acid chain: Rho GTPase-activating protein 10 (785 aa).

A BAR domain is found at 7 to 262; it reads EFSDCYLDSP…IRQNPKDHKR (256 aa). The PH domain maps to 265 to 372; it reads QFTAEGYLYV…WLEVLGGKEA (108 aa). A Rho-GAP domain is found at 389–574; it reads AQLDKMGFTI…ILIENHEKIF (186 aa). Residues 576-708 are disordered; the sequence is TPPDATLPEP…PAVTPPSPKL (133 aa). Residues 584-595 are compositionally biased toward pro residues; the sequence is EPGPLSAPPNAP. A compositionally biased stretch (basic residues) spans 598–608; the sequence is QSKRQGQRTKR. A compositionally biased stretch (basic and acidic residues) spans 622-632; sequence GDRPSLPKEDT. Low complexity predominate over residues 633–650; sequence PPSSLDSLSSPSPTTATA. The segment covering 675–697 has biased composition (polar residues); that stretch reads APSQARSSAVQWLNPQSPTTPSC. The 59-residue stretch at 727 to 785 folds into the SH3 domain; sequence IISRKARAVYPCEAEHSSELSFEIGAIFEDVQTSREPGWLEGTLNGKRGLIPQNYVKLL.

As to quaternary structure, interacts with PKN3. Interacts with caspase-activated PAK2 proteolytic fragment PAK-2p34; the interaction does not affect ARHGAP10 GTPase activation activity towards RHOA and CDC42. Interacts via its SH3 domain with PTK2/FAK1. Interacts with PTK2B/PYK2; the interaction negatively regulates ARHGAP10 GTPase-activating activity. Interacts with MICAL1 and WDR44; complex formation might transit from GRAF2/ARHGAP10-MICAL1 to GRAF2/ARHGAP10-WDR44 complexes.

Its subcellular location is the cytoplasm. The protein resides in the perinuclear region. The protein localises to the cell membrane. It localises to the endosome membrane. In terms of biological role, GTPase-activating protein that catalyzes the conversion of active GTP-bound Rho GTPases to their inactive GDP-bound form, thus suppressing various Rho GTPase-mediated cellular processes. Also converts Cdc42 to an inactive GDP-bound state. Essential for PTKB2 regulation of cytoskeletal organization via Rho family GTPases. Inhibits PAK2 proteolytic fragment PAK-2p34 kinase activity and changes its localization from the nucleus to the perinuclear region. Stabilizes PAK-2p34 thereby increasing stimulation of cell death. Associates with MICAL1 on the endosomal membrane to promote Rab8-Rab10-dependent tubule extension. After dissociation with MICAL1, recruits WDR44 which connects the endoplasmic reticulum (ER) with the endosomal tubule, thereby participating in the export of a subset of neosynthesized proteins. The polypeptide is Rho GTPase-activating protein 10 (ARHGAP10) (Bos taurus (Bovine)).